The chain runs to 101 residues: uncharacterized protein (101 aa).

This is an uncharacterized protein from Schizosaccharomyces pombe (strain 972 / ATCC 24843) (Fission yeast).